A 135-amino-acid polypeptide reads, in one-letter code: MRAFLRNQKYEDMHNIIHILQIRKLRHRLSNFPRLPGILAPETVLLPFCYKVFRKKEKVKRSQKATEFIDYSIEQSHHAILTPLQTHLTMKGSSMKCSSLSSEAILFTLTLQLTQTLGLECCLLYLSKTIHPQII.

In terms of tissue distribution, expressed in colon, prostate, small intestine, testis and spleen, with lower expression in thymus, ovary, and peripheral blood leukocytes. Up-regulated expression in prostate, breast, and bladder cancer, but not in lung and colon cancer.

The protein localises to the cytoplasm. It is found in the nucleus. In Homo sapiens (Human), this protein is Prostate and breast cancer overexpressed gene 1 protein (PBOV1).